A 318-amino-acid chain; its full sequence is MAEVLVLVEHAEGALKKVSAELITAARALGEPAAVVVGVPGTAAPLVDGLKAAGAAKIYVAESDLVDKYLITPAVDVLAGLAESSAPAGVLIAATADGKEIAGRLAARIGSGLLVDVVDVREGGVGVHSIFGGAFTVEAQANGDTPVITVRAGAVEAEPAAGAGEQVSVEVPAAAENAARITAREPAVAGDRPELTEATIVVAGGRGVGSAENFSVVEALADSLGAAVGASRAAVDSGYYPGQFQVGQTGKTVSPQLYIALGISGAIQHRAGMQTSKTIVAVNKDEEAPIFEIADYGVVGDLFKVAPQLTEAIKARKG.

257 to 285 (LYIALGISGAIQHRAGMQTSKTIVAVNKD) contacts FAD.

This sequence belongs to the ETF alpha-subunit/FixB family. In terms of assembly, heterodimer of an alpha and a beta subunit. It depends on FAD as a cofactor.

The electron transfer flavoprotein serves as a specific electron acceptor for other dehydrogenases. It transfers the electrons to the main respiratory chain via ETF-ubiquinone oxidoreductase (ETF dehydrogenase). This is Electron transfer flavoprotein subunit alpha (etfA) from Mycobacterium tuberculosis (strain CDC 1551 / Oshkosh).